Consider the following 309-residue polypeptide: Bifunctional methylenetetrahydrofolate dehydrogenase/cyclohydrolase, mitochondrial (309 aa).

Belongs to the tetrahydrofolate dehydrogenase/cyclohydrolase family. In terms of assembly, homodimer. Requires Mg(2+) as cofactor.

The protein localises to the mitochondrion. It carries out the reaction (6R)-5,10-methylene-5,6,7,8-tetrahydrofolate + NAD(+) = (6R)-5,10-methenyltetrahydrofolate + NADH. The catalysed reaction is (6R)-5,10-methenyltetrahydrofolate + H2O = (6R)-10-formyltetrahydrofolate + H(+). In terms of biological role, may play a role in spermatogenesis. The polypeptide is Bifunctional methylenetetrahydrofolate dehydrogenase/cyclohydrolase, mitochondrial (Nmdmc) (Drosophila melanogaster (Fruit fly)).